The chain runs to 232 residues: A-type ATP synthase subunit D (232 aa).

This sequence belongs to the V-ATPase D subunit family. In terms of assembly, has multiple subunits with at least A(3), B(3), C, D, E, F, H, I and proteolipid K(x).

The protein resides in the cell membrane. In terms of biological role, component of the A-type ATP synthase that produces ATP from ADP in the presence of a proton gradient across the membrane. In Methanopyrus kandleri (strain AV19 / DSM 6324 / JCM 9639 / NBRC 100938), this protein is A-type ATP synthase subunit D.